The primary structure comprises 367 residues: Peptide chain release factor 2 (367 aa).

The residue at position 254 (Gln-254) is an N5-methylglutamine.

This sequence belongs to the prokaryotic/mitochondrial release factor family. Methylated by PrmC. Methylation increases the termination efficiency of RF2.

It is found in the cytoplasm. Peptide chain release factor 2 directs the termination of translation in response to the peptide chain termination codons UGA and UAA. The polypeptide is Peptide chain release factor 2 (Variovorax paradoxus (strain S110)).